Consider the following 205-residue polypeptide: Large ribosomal subunit protein uL4 (205 aa).

This sequence belongs to the universal ribosomal protein uL4 family. In terms of assembly, part of the 50S ribosomal subunit.

Functionally, one of the primary rRNA binding proteins, this protein initially binds near the 5'-end of the 23S rRNA. It is important during the early stages of 50S assembly. It makes multiple contacts with different domains of the 23S rRNA in the assembled 50S subunit and ribosome. In terms of biological role, forms part of the polypeptide exit tunnel. The polypeptide is Large ribosomal subunit protein uL4 (Roseobacter denitrificans (strain ATCC 33942 / OCh 114) (Erythrobacter sp. (strain OCh 114))).